Here is a 1051-residue protein sequence, read N- to C-terminus: MQETFKFLRCNSQGEAVEDKYSLETLKNHFVVRDEYNNLFRVFSSRDDFWEWEAAQPFEQKCFHEVVFGFLPQRLKFDIDFPVNKSYSNDNVDENVDDIVNDDDNVYDILDMIINVIMDVFYETYSLPYNINLTREQILLTDSIGLNKKRELKYSFHIILYTHSVLNNNEAKVFTSKVLENLPKHVYPFVDPQVNKSIQNFRIIGSHKKGSMRVKMFNEELADVFETSTTTKKSDTLIATPFETTCLPCIFTNVKETTPSSCDTIQQSELEEVLKFAGTLCKNHCFLRVHKNLVLFKRTSPSYCEICKRMHDKDNTLILRVTGNKVYQHCRHDNKHSLLMGSLSGTNNFVETYVDQVMTKSIEVHESILFEELPDPQKHIYDESSMREYERVPTLVVKAQMKIGKTIQLRNYLQKYYGNNSISKQQTIRFVTFRQIFSKNIQSRLPNFTLYSEVTGDLDSYERVIIQVESLFRLTSTAEPVDLLILDEVESIFNQFNSGLHKYFAPSFAIFMWMLETANYVICLDANLGNRTYNILQRFRGDVPIFFHWNQYKRAQHDMYYFTSSRETWLNNLLKDLLEDKKIVIPTNSLMEARLLQSFIQKKFPEKKIGFYSSKSTAHERESHFNNVSYYWGLVDILIYTPTISAGVSYEDKRFDVLYGFFNNMSCDVETCCQMLGRVRELKSKCYKICLQGKQNYFPETIEDIEMFTLQKRDTLFQTISNHQLSFTYNKETGRPIYYKTPYYHLWLETMRIQHLSKNHFITRFINQIADTGAKVFILTGEKLETVKQYTSIKMEIKHQDYVNIASAETIDANKALLIKQNLKEGITVDQQDLFAYEKYKLLEFYAWHGHKITPKFVEQYNSFMTKQNYTGRVQISRGKTVYESLTMLQTQELNFHQWAMQHAEHHDLQYNYSFQSHMYAIMLLTKCGFKCVQDPNILTNEQLMAKLVDEFVQYDLSAVSFEFKLKKPNKTDPQTILKFINKVLGLRYGLKIHHNKGNYYIKNTKAGSLIPFVRQQIKQSPCVVSNLLPITETSSVKEETSPIKETFTET.

It belongs to the asfivirus F1055L family.

May be involved in DNA replication. This Ornithodoros (relapsing fever ticks) protein is Putative helicase/primase complex protein.